We begin with the raw amino-acid sequence, 509 residues long: Lysine--tRNA ligase (509 aa).

Positions 1-18 (MSEQNPTQAAKQAPQQEL) are enriched in polar residues. A disordered region spans residues 1-20 (MSEQNPTQAAKQAPQQELND). Residues Glu418 and Glu425 each contribute to the Mg(2+) site.

It belongs to the class-II aminoacyl-tRNA synthetase family. In terms of assembly, homodimer. Mg(2+) is required as a cofactor.

The protein localises to the cytoplasm. The catalysed reaction is tRNA(Lys) + L-lysine + ATP = L-lysyl-tRNA(Lys) + AMP + diphosphate. In Psychromonas ingrahamii (strain DSM 17664 / CCUG 51855 / 37), this protein is Lysine--tRNA ligase.